The sequence spans 78 residues: Large ribosomal subunit protein uL29 (78 aa).

Belongs to the universal ribosomal protein uL29 family.

The chain is Large ribosomal subunit protein uL29 from Rhodococcus erythropolis (strain PR4 / NBRC 100887).